We begin with the raw amino-acid sequence, 101 residues long: Small ribosomal subunit protein uS14 (101 aa).

A disordered region spans residues 51-70 (LPRDSSPSRQRNRCSQTGRP). A compositionally biased stretch (polar residues) spans 52 to 68 (PRDSSPSRQRNRCSQTG).

It belongs to the universal ribosomal protein uS14 family. As to quaternary structure, part of the 30S ribosomal subunit. Contacts proteins S3 and S10.

Binds 16S rRNA, required for the assembly of 30S particles and may also be responsible for determining the conformation of the 16S rRNA at the A site. In Mannheimia succiniciproducens (strain KCTC 0769BP / MBEL55E), this protein is Small ribosomal subunit protein uS14.